We begin with the raw amino-acid sequence, 869 residues long: Protein translocase subunit SecA (869 aa).

ATP is bound by residues glutamine 85, 103–107, and aspartate 508; that span reads GEGKT.

It belongs to the SecA family. As to quaternary structure, monomer and homodimer. Part of the essential Sec protein translocation apparatus which comprises SecA, SecYEG and auxiliary proteins SecDF. Other proteins may also be involved.

Its subcellular location is the cell membrane. The protein resides in the cytoplasm. It catalyses the reaction ATP + H2O + cellular proteinSide 1 = ADP + phosphate + cellular proteinSide 2.. Its function is as follows. Part of the Sec protein translocase complex. Interacts with the SecYEG preprotein conducting channel. Has a central role in coupling the hydrolysis of ATP to the transfer of proteins into and across the cell membrane, serving as an ATP-driven molecular motor driving the stepwise translocation of polypeptide chains across the membrane. The polypeptide is Protein translocase subunit SecA (Deinococcus geothermalis (strain DSM 11300 / CIP 105573 / AG-3a)).